A 947-amino-acid chain; its full sequence is MSLPSRQTAIIVNPPPPEYINTKKNGRLTNQLQYLQKVVLKDLWKHSFSWPFQRPVDAVKLQLPDYYTIIKNPMDLNTIKKRLENKYYAKASECIEDFNTMFSNCYLYNKPGDDIVLMAQALEKLFMQKLSQMPQEEQVVGVKERIKKGTQQNIAVSSAKEKSSPSATEKVFKQQEIPSVFPKTSISPLNVVQGASVNSSSQTAAQVTKGVKRKADTTTPATSAVKASSEFSPTFTEKSVALPPIKENMPKNVLPDSQQQYNVVKTVKVTEQLRHCSEILKEMLAKKHFSYAWPFYNPVDVNALGLHNYYDVVKNPMDLGTIKEKMDNQEYKDAYKFAADVRLMFMNCYKYNPPDHEVVTMARMLQDVFETHFSKIPIEPVESMPLCYIKTDITETTGRENTNEASSEGNSSDDSEDERVKRLAKLQEQLKAVHQQLQVLSQVPFRKLNKKKEKSKKEKKKEKVNNSNENPRKMCEQMRLKEKSKRNQPKKRKQQFIGLKSEDEDNAKPMNYDEKRQLSLNINKLPGDKLGRVVHIIQSREPSLSNSNPDEIEIDFETLKASTLRELEKYVSACLRKRPLKPPAKKIMMSKEELHSQKKQELEKRLLDVNNQLNSRKRQTKSDKTQPSKAVENVSRLSESSSSSSSSSESESSSSDLSSSDSSDSESEMFPKFTEVKPNDSPSKENVKKMKNECIPPEGRTGVTQIGYCVQDTTSANTTLVHQTTPSHVMPPNHHQLAFNYQELEHLQTVKNISPLQILPPSGDSEQLSNGITVMHPSGDSDTTMLESECQAPVQKDIKIKNADSWKSLGKPVKPSGVMKSSDELFNQFRKAAIEKEVKARTQELIRKHLEQNTKELKASQENQRDLGNGLTVESFSNKIQNKCSGEEQKEHQQSSEAQDKSKLWLLKDRDLARQKEQERRRREAMVGTIDMTLQSDIMTMFENNFD.

The region spanning 27–133 is the Bromo 1 domain; the sequence is RLTNQLQYLQ…KLFMQKLSQM (107 aa). Residue N109 participates in JQ1 binding. S187 is modified (phosphoserine). Residues 202-228 are disordered; that stretch reads QTAAQVTKGVKRKADTTTPATSAVKAS. The short motif at 209 to 220 is the Nuclear localization signal element; the sequence is KGVKRKADTTTP. Polar residues predominate over residues 217 to 228; sequence TTTPATSAVKAS. A Bromo 2 domain is found at 267 to 376; it reads VKVTEQLRHC…DVFETHFSKI (110 aa). Disordered stretches follow at residues 395 to 420, 444 to 511, 610 to 698, and 882 to 924; these read ETTG…DERV, PFRK…KPMN, NNQL…IPPE, and NKCS…RRRE. Positions 417 to 470 form a coiled coil; it reads DERVKRLAKLQEQLKAVHQQLQVLSQVPFRKLNKKKEKSKKEKKKEKVNNSNEN. Basic residues predominate over residues 447 to 462; that stretch reads KLNKKKEKSKKEKKKE. Residues 470-481 show a composition bias toward basic and acidic residues; that stretch reads NPRKMCEQMRLK. Residues 482 to 494 are compositionally biased toward basic residues; the sequence is EKSKRNQPKKRKQ. Residues 500–582 form the NET domain; it reads KSEDEDNAKP…ACLRKRPLKP (83 aa). The stretch at 591–621 forms a coiled coil; that stretch reads KEELHSQKKQELEKRLLDVNNQLNSRKRQTK. Residues 637–662 are compositionally biased toward low complexity; it reads LSESSSSSSSSSESESSSSDLSSSDS. Basic and acidic residues-rich tracts occupy residues 674–692 and 885–924; these read TEVK…KMKN and SGEE…RRRE.

It belongs to the BET family. In terms of assembly, interacts with mRNA splicing machinery proteins SRSF2, DDX5, HNRNPK and TARDBP. Interacts with the acetylated N-terminus of histone H1, H2, H3 and H4. Interacts with P-TEFb components CDK9 and CCNT1/cyclin-T1. Interacts with SMARCE1. Interacts with the acetylated N-terminus of histone H1.4, H2A, H2B, H3 and H4. In terms of processing, ubiquitinated in a SPOP-dependent manner, leading to proteasomal degradation. In terms of tissue distribution, testis-specific. A 3-fold higher expression is seen in adult testis than in embryo testis. Expression seems to be correlated with histone H4 hyperacetylation during the haploid phase of spermatogenesis (spermiogenesis). No expression, or very low expression is seen in patients' testes with abnormal spermatogenesis. Expressed in cancers such as non-small cell lung cancer and squamous cell carcinomas of the head and neck as well as of esophagus, but not in melanoma or in cancers of the colon, breast, kidney and bladder.

The protein localises to the nucleus. Its function is as follows. Testis-specific chromatin protein that specifically binds histone H4 acetylated at 'Lys-5' and 'Lys-8' (H4K5ac and H4K8ac, respectively) and plays a key role in spermatogenesis. Required in late pachytene spermatocytes: plays a role in meiotic and post-meiotic cells by binding to acetylated histones at the promoter of specific meiotic and post-meiotic genes, facilitating their activation at the appropriate time. In the post-meiotic phase of spermatogenesis, binds to hyperacetylated histones and participates in their general removal from DNA. Also recognizes and binds a subset of butyrylated histones: able to bind histone H4 butyrylated at 'Lys-8' (H4K8ac), while it is not able to bind H4 butyrylated at 'Lys-5' (H4K5ac). Also acts as a component of the splicing machinery in pachytene spermatocytes and round spermatids and participates in 3'-UTR truncation of specific mRNAs in post-meiotic spermatids. Required for chromocenter organization, a structure comprised of peri-centromeric heterochromatin. This Homo sapiens (Human) protein is Bromodomain testis-specific protein (BRDT).